Reading from the N-terminus, the 298-residue chain is Ectoine dioxygenase (298 aa).

The segment covering 1 to 18 (MLQQAIDRDPVDRIDRYP) has biased composition (basic and acidic residues). A disordered region spans residues 1 to 26 (MLQQAIDRDPVDRIDRYPTRTAEPAP). Q133 contacts L-ectoine. Residues H150, D152, and H251 each coordinate Fe cation.

It belongs to the PhyH family. EctD subfamily. As to quaternary structure, homodimer. Requires Fe(2+) as cofactor.

The enzyme catalyses L-ectoine + 2-oxoglutarate + O2 = 5-hydroxyectoine + succinate + CO2. Functionally, involved in the biosynthesis of 5-hydroxyectoine, called compatible solute, which helps organisms to survive extreme osmotic stress by acting as a highly soluble organic osmolyte. Catalyzes the 2-oxoglutarate-dependent selective hydroxylation of L-ectoine to yield (4S,5S)-5-hydroxyectoine. In Nocardia farcinica (strain IFM 10152), this protein is Ectoine dioxygenase.